The chain runs to 39 residues: Large ribosomal subunit protein bL36 (39 aa).

This sequence belongs to the bacterial ribosomal protein bL36 family.

The sequence is that of Large ribosomal subunit protein bL36 from Levilactobacillus brevis (strain ATCC 367 / BCRC 12310 / CIP 105137 / JCM 1170 / LMG 11437 / NCIMB 947 / NCTC 947) (Lactobacillus brevis).